A 359-amino-acid chain; its full sequence is G-protein coupled receptor 15 (359 aa).

Over 1–33 the chain is Extracellular; the sequence is MDPEETSVYLDYYYATSPNPDIRETHSHVPYTS. The helical transmembrane segment at 34–54 threads the bilayer; that stretch reads VFLPVFYTAVFLTGVLGNLVL. At 55–69 the chain is on the cytoplasmic side; it reads MGALHFKPGSRRLID. Residues 70 to 90 form a helical membrane-spanning segment; the sequence is IFIINLAASDFIFLVTLPLWV. Topologically, residues 91–120 are extracellular; that stretch reads DKEASLGLWRTGSFLCKGSSYMISVNMHCS. A helical membrane pass occupies residues 121–141; the sequence is VFLLTCMSVDRYLAIVCPVVS. The Cytoplasmic portion of the chain corresponds to 142–149; it reads RKFRRTDC. The chain crosses the membrane as a helical span at residues 150 to 170; sequence AYVVCASIWFISCLLGLPTLL. The Extracellular segment spans residues 171–192; the sequence is SRELTLIDDKPYCAEKKATPLK. The chain crosses the membrane as a helical span at residues 193-213; it reads LIWSLVALIFTFFVPLLNIVT. The Cytoplasmic segment spans residues 214–239; the sequence is CYCCIARKLCAHYQQSGRHNKKLKKS. A helical membrane pass occupies residues 240–260; sequence IKIILIVVAAFLVSWLPFNTF. Topologically, residues 261 to 283 are extracellular; that stretch reads KLLAIVSGLQERYFPSAMLQLGM. Residues 284 to 304 traverse the membrane as a helical segment; that stretch reads EVSGPLAFANSCVNPFIYYIF. Topologically, residues 305–359 are cytoplasmic; sequence DSYIRRAIVHCLCPCLKNYDFGSSTETSDSHLTKALSTFIHAEDFTRRRKRSVSL. Residue S358 is modified to Phosphoserine.

This sequence belongs to the G-protein coupled receptor 1 family. Interacts with adapter YWHAE; this interaction promotes ER-to-Golgi transport of GPR15. Phosphorylation is necessary for YWHAE binding and efficient surface expression. Post-translationally, O-glycosylated. Sialylated O-glycans in the N-terminal tail inhibits binding of GPR15LG. In terms of processing, sulfation is required for efficient binding of GPR15LG.

It is found in the cell membrane. G protein-coupled receptor that plays an important role in immune homeostasis. Acts via its natural ligand GPR15LG, a chemokine-like polypeptide strongly expressed in gastrointestinal tissues. GPR15-GPR15LG signaling axis regulates intestinal homeostasis and inflammation through the migration of immune cells. Controls thereby the specific homing of T-cells, particularly FOXP3+ regulatory T-cells (Tregs), to the large intestine lamina propria. Also required for skin localization of thymus-derived dendritic epidermal T-cells. Plays an important role in mediating cytoprotective function as well as angiogenesis of thrombomodulin. Mechanistically, preferentially signals through the Gi/o pathway to inhibit adenylate cyclase activity and activate a phosphatidylinositol-calcium second messenger system that regulates the release of Ca(2+) ions from intracellular stores. The polypeptide is G-protein coupled receptor 15 (GPR15) (Macaca fascicularis (Crab-eating macaque)).